Consider the following 504-residue polypeptide: Alkylcitrate dehydratase phiI (504 aa).

The protein belongs to the PrpD family. Monomer.

The catalysed reaction is (4E,11E)-2-hydroxytrideca-4,11-dien-1,2,3-tricarboxylate + 2 H(+) = [4-(deca-1,8-diyl)-2,5-dioxo-2,5-dihydro-3-furanyl]acetate + 2 H2O. Its pathway is secondary metabolite biosynthesis. Functionally, alkylcitrate dehydratase; part of the gene cluster that mediates the biosynthesis of the antihypercholesterolemic agents phomoidrides which are dimeric anhydrides. Within the pathway, the alkylcitrate synthase (ACS) phiJ and the alkylcitrate dehydratase (ACDH) phiI produce the decarboxylated monomeric anhydrides by coupling the C12-fatty acyl product from phiA with oxalacetic acid. The pathway begins with the highly reducing polyketide synthase phiA that catalyzes the formation of a C12-fatty acyl-ACP, starting from one acetate and 5 malonate units. The hydrolase phiM is involved in the release of the C12-fatty acyl chain from phiA. The alkylcitrate synthase (ACS) phiJ and the alkylcitrate dehydratase (ACDH) phiI then give rise to decarboxylated monomeric anhydrides by coupling the C12-fatty acyl chain with oxalacetic acid. The cyclase phiC is responsible for the dimerization of the monomeric anhydrides which leads to the production of prephomoidride that contains the characteristic bicyclo[4.3.1]deca-1,6-diene system of phomoidrides. Iterative oxidation catalyzed by the alpha-ketoglutarate-dependent dioxygenase phiK produced then phomoidride A. Finally, the methyltransferase phiE converts phomoidride A to phomoidride B via an acetalization reaction. The phosphatidylethanolamine-binding protein phiB and phiN are not essential for dimerization and their functions have still to be determined. This chain is Alkylcitrate dehydratase phiI, found in Fungal sp. (strain ATCC 74256).